Consider the following 274-residue polypeptide: Large ribosomal subunit protein uL2cz/uL2cy (274 aa).

Disordered stretches follow at residues 1 to 22 (MAIN…DSQV) and 224 to 274 (NPVD…RRSK).

Belongs to the universal ribosomal protein uL2 family. Part of the 50S ribosomal subunit.

It localises to the plastid. It is found in the chloroplast. In Helianthus annuus (Common sunflower), this protein is Large ribosomal subunit protein uL2cz/uL2cy (rpl2-A).